Reading from the N-terminus, the 271-residue chain is Urease accessory protein UreD (271 aa).

This sequence belongs to the UreD family. As to quaternary structure, ureD, UreF and UreG form a complex that acts as a GTP-hydrolysis-dependent molecular chaperone, activating the urease apoprotein by helping to assemble the nickel containing metallocenter of UreC. The UreE protein probably delivers the nickel.

Its subcellular location is the cytoplasm. Functionally, required for maturation of urease via the functional incorporation of the urease nickel metallocenter. The sequence is that of Urease accessory protein UreD from Azorhizobium caulinodans (strain ATCC 43989 / DSM 5975 / JCM 20966 / LMG 6465 / NBRC 14845 / NCIMB 13405 / ORS 571).